Reading from the N-terminus, the 402-residue chain is Tyrosine--tRNA ligase (402 aa).

The 'HIGH' region motif lies at 48 to 57 (PTGSDIHLGH). Residues 235–239 (KMSKS) carry the 'KMSKS' region motif. Lysine 238 contributes to the ATP binding site. Residues 338 to 402 (AKAFYLVSAV…GKKKFVRLVL (65 aa)) enclose the S4 RNA-binding domain.

Belongs to the class-I aminoacyl-tRNA synthetase family. TyrS type 2 subfamily. Homodimer.

The protein localises to the cytoplasm. The catalysed reaction is tRNA(Tyr) + L-tyrosine + ATP = L-tyrosyl-tRNA(Tyr) + AMP + diphosphate + H(+). In terms of biological role, catalyzes the attachment of tyrosine to tRNA(Tyr) in a two-step reaction: tyrosine is first activated by ATP to form Tyr-AMP and then transferred to the acceptor end of tRNA(Tyr). The sequence is that of Tyrosine--tRNA ligase from Synechococcus elongatus (strain ATCC 33912 / PCC 7942 / FACHB-805) (Anacystis nidulans R2).